A 200-amino-acid polypeptide reads, in one-letter code: BREX protein BrxB (200 aa).

This sequence belongs to the BrxB family.

Functionally, BREX systems (bacteriophage exclusion) provide immunity against bacteriophage. Part of a type 1 BREX system which protects against dsDNA phage. This system allows phage adsorption but prevents phage DNA replication, without degradation of the phage DNA. Methylation of bacterial DNA by PglX guides self/non-self discrimination. When the brxA-brxB-brxC-pglX-pglZ-brxL genes are transformed into a susceptible E.coli strain (BW25113) they confer very high resistance to infection by bacteriophage VR7 and VpaE1, about 100-fold protection against lambda, T5 and T7 and no protection against RNA phage Qbeta, ssDNA phage M13 or dSDNA phage T4 and VR5. Glycosylated phage DNA is not susceptible to BREX. The BREX system does not confer resistance to lysogenic lambda phage, i.e. prophage that are integrated into the chromosomal DNA and then induced to form phage. This chain is BREX protein BrxB, found in Escherichia coli O9:H4 (strain HS).